The chain runs to 463 residues: Ribosomal protein uS12 methylthiotransferase RimO (463 aa).

The 116-residue stretch at 15–130 folds into the MTTase N-terminal domain; the sequence is PKVGMVSLGC…VMQAVHSHLP (116 aa). 6 residues coordinate [4Fe-4S] cluster: cysteine 24, cysteine 60, cysteine 89, cysteine 161, cysteine 165, and cysteine 168. The region spanning 147–392 is the Radical SAM core domain; that stretch reads LTPRHYAYLK…MEVAEEVSAA (246 aa). The TRAM domain maps to 395–463; sequence ARKIGKTLKV…ADGHDLWGEV (69 aa).

It belongs to the methylthiotransferase family. RimO subfamily. [4Fe-4S] cluster serves as cofactor.

The protein localises to the cytoplasm. The enzyme catalyses L-aspartate(89)-[ribosomal protein uS12]-hydrogen + (sulfur carrier)-SH + AH2 + 2 S-adenosyl-L-methionine = 3-methylsulfanyl-L-aspartate(89)-[ribosomal protein uS12]-hydrogen + (sulfur carrier)-H + 5'-deoxyadenosine + L-methionine + A + S-adenosyl-L-homocysteine + 2 H(+). Functionally, catalyzes the methylthiolation of an aspartic acid residue of ribosomal protein uS12. The sequence is that of Ribosomal protein uS12 methylthiotransferase RimO from Burkholderia mallei (strain NCTC 10229).